Reading from the N-terminus, the 582-residue chain is tRNA(Ile)-lysidine synthase (582 aa).

Residue 46-51 participates in ATP binding; it reads SGGADS. Positions 402-525 constitute a CMP/dCMP-type deaminase domain; sequence DPLHAAMGEA…DLLADHWGWR (124 aa). Residues 548 to 582 form a disordered region; it reads VRRRSADTPQTPNAETPAPRSSRSTSASGKPTMLE. The span at 563–575 shows a compositional bias: low complexity; that stretch reads TPAPRSSRSTSAS.

Belongs to the tRNA(Ile)-lysidine synthase family.

Its subcellular location is the cytoplasm. The enzyme catalyses cytidine(34) in tRNA(Ile2) + L-lysine + ATP = lysidine(34) in tRNA(Ile2) + AMP + diphosphate + H(+). Functionally, ligates lysine onto the cytidine present at position 34 of the AUA codon-specific tRNA(Ile) that contains the anticodon CAU, in an ATP-dependent manner. Cytidine is converted to lysidine, thus changing the amino acid specificity of the tRNA from methionine to isoleucine. This is tRNA(Ile)-lysidine synthase from Deinococcus radiodurans (strain ATCC 13939 / DSM 20539 / JCM 16871 / CCUG 27074 / LMG 4051 / NBRC 15346 / NCIMB 9279 / VKM B-1422 / R1).